Here is a 415-residue protein sequence, read N- to C-terminus: FXa-directed anticoagulant (415 aa).

The signal sequence occupies residues 1-17 (MYLKIVILVTFPLVCFT). N-linked (GlcNAc...) asparagine glycans are attached at residues N117, N166, N216, and N320.

This sequence belongs to the serpin family. In terms of assembly, (Microbial infection) Interacts with Zika virus envelope protein E and Zika virus-like particles; the interaction does not affect Zika virus replication in human endothelial cells and keratinocytes. In terms of processing, the N-terminus is blocked. In terms of tissue distribution, female salivary gland (at protein level). Not detected in female carcass without head and salivary glands. Not detected in male tissues.

The protein localises to the secreted. Its function is as follows. Anticoagulant serpin-type protein inhibiting host coagulation factor Xa (F10). Does not inhibit host thrombin (F2) and trypsin. Functionally, (Microbial infection) Does not affect Zika virus replication in human endothelial cells and keratinocytes. This chain is FXa-directed anticoagulant, found in Aedes aegypti (Yellowfever mosquito).